The following is a 221-amino-acid chain: Uracil-DNA glycosylase (221 aa).

Aspartate 64 functions as the Proton acceptor in the catalytic mechanism.

The protein belongs to the uracil-DNA glycosylase (UDG) superfamily. UNG family.

The protein resides in the cytoplasm. It carries out the reaction Hydrolyzes single-stranded DNA or mismatched double-stranded DNA and polynucleotides, releasing free uracil.. Excises uracil residues from the DNA which can arise as a result of misincorporation of dUMP residues by DNA polymerase or due to deamination of cytosine. The polypeptide is Uracil-DNA glycosylase (Mycoplasmopsis pulmonis (strain UAB CTIP) (Mycoplasma pulmonis)).